Consider the following 460-residue polypeptide: Chromosomal replication initiator protein DnaA 1 (460 aa).

Positions 1–68 are domain I, interacts with DnaA modulators; it reads MRAWEEFLLL…KSGLVNNNNK (68 aa). Residues 68-102 form a domain II region; sequence KPIRVHVTSVDKAAPFYKEKQMQQEKTAYFTMHYG. The interval 103 to 321 is domain III, AAA+ region; that stretch reads SVNPEMTFSN…HALNLLAKRV (219 aa). ATP-binding residues include glycine 151, glycine 153, lysine 154, and threonine 155. The interval 322-460 is domain IV, binds dsDNA; the sequence is MYKKLSHQLL…EFFPSEEMII (139 aa).

This sequence belongs to the DnaA family. As to quaternary structure, oligomerizes as a right-handed, spiral filament on DNA at oriC.

Its subcellular location is the cytoplasm. Plays an essential role in the initiation and regulation of chromosomal replication. ATP-DnaA binds to the origin of replication (oriC) to initiate formation of the DNA replication initiation complex once per cell cycle. Binds the DnaA box (a 9 base pair repeat at the origin) and separates the double-stranded (ds)DNA. Forms a right-handed helical filament on oriC DNA; dsDNA binds to the exterior of the filament while single-stranded (ss)DNA is stabiized in the filament's interior. The ATP-DnaA-oriC complex binds and stabilizes one strand of the AT-rich DNA unwinding element (DUE), permitting loading of DNA polymerase. After initiation quickly degrades to an ADP-DnaA complex that is not apt for DNA replication. Binds acidic phospholipids. The polypeptide is Chromosomal replication initiator protein DnaA 1 (Chlamydia pneumoniae (Chlamydophila pneumoniae)).